Reading from the N-terminus, the 185-residue chain is MIVDTFTNRGSTFFSKLSTVLFFLCAVITFQGVIQRREVELDTPVYVHYAKYRSARFYHAFRNVRQQYAQVKFNMDADLSELWDWNTKHVVVYLVASYSTEKHEKNQVVVWDKILSSPEESKMFMKDTLSNIQAHPFNEYSNQFEGKNATYTLHWTVSPKMGFLSWGAGPGSYEIPFHKIITQPK.

The Cytoplasmic segment spans residues 1 to 12 (MIVDTFTNRGST). A helical; Signal-anchor for type II membrane protein transmembrane segment spans residues 13–34 (FFSKLSTVLFFLCAVITFQGVI). Over 35–185 (QRREVELDTP…PFHKIITQPK (151 aa)) the chain is Lumenal. Asn-148 carries an N-linked (GlcNAc...) asparagine glycan.

The protein belongs to the SPCS3 family. In terms of assembly, component of the signal peptidase complex (SPC) composed of a catalytic subunit sec11 and three accessory subunits spc1, spc2 and spc3. The complex induces a local thinning of the ER membrane which is used to measure the length of the signal peptide (SP) h-region of protein substrates. This ensures the selectivity of the complex towards h-regions shorter than 18-20 amino acids. SPC associates with the translocon complex.

It localises to the endoplasmic reticulum membrane. Its function is as follows. Essential component of the signal peptidase complex (SPC) which catalyzes the cleavage of N-terminal signal sequences from nascent proteins as they are translocated into the lumen of the endoplasmic reticulum. Essential for the SPC catalytic activity, possibly by stabilizing and positioning the active center of the complex close to the lumenal surface. Essential for viability. The protein is Signal peptidase complex subunit 3 (spc3) of Schizosaccharomyces pombe (strain 972 / ATCC 24843) (Fission yeast).